A 392-amino-acid chain; its full sequence is Protein FAM53C (392 aa).

Methionine 1 is subject to N-acetylmethionine. The interval 78-119 is disordered; the sequence is LRPPSRGNSPKEQPFSQVLRPEPPDPEKLPVPPAPPSKRHCR. A compositionally biased stretch (polar residues) spans 83 to 93; sequence RGNSPKEQPFS. 6 positions are modified to phosphoserine: serine 122, serine 162, serine 232, serine 234, serine 255, and serine 273. Disordered stretches follow at residues 141 to 167 and 204 to 294; these read LWTP…PKRV and RPCA…EDPR. Residues 241 to 256 are compositionally biased toward low complexity; that stretch reads ASRFLPSARSSPASSP. Basic and acidic residues predominate over residues 278 to 294; sequence LDARKTGVKRRHEEDPR. Serine 299 is subject to Phosphoserine. Residues 341–364 are disordered; it reads ASCSPTGGSSQVLSESEEEEEGAV.

Belongs to the FAM53 family.

In Homo sapiens (Human), this protein is Protein FAM53C.